The chain runs to 334 residues: B1 bradykinin receptor (334 aa).

Positions 1-21 are disordered; the sequence is MASQASLKLQPSNQSQQAPPN. Residues 1 to 41 are Extracellular-facing; that stretch reads MASQASLKLQPSNQSQQAPPNITSCEGAPEAWDLLCRVLPG. A compositionally biased stretch (low complexity) spans 10 to 21; sequence QPSNQSQQAPPN. N-linked (GlcNAc...) asparagine glycosylation is found at Asn-13 and Asn-21. A helical transmembrane segment spans residues 42-62; the sequence is FVITVCFFGLLGNLLVLSFFL. The Cytoplasmic segment spans residues 63-80; it reads LPWRRWWQQRRQRLTIAE. The chain crosses the membrane as a helical span at residues 81 to 101; sequence IYLANLAASDLVFVLGLPFWA. Topologically, residues 102–118 are extracellular; the sequence is ENVGNRFNWPFGSDLCR. The cysteines at positions 117 and 196 are disulfide-linked. Residues 119–139 traverse the membrane as a helical segment; sequence VVSGVIKANLFISIFLVVAIS. Over 140–161 the chain is Cytoplasmic; sequence QDRYRLLVYPMTSWGNRRRRQA. A helical membrane pass occupies residues 162–182; that stretch reads QVTCLLIWVAGGLLSTPTFLL. At 183 to 214 the chain is on the extracellular side; the sequence is RSVKVVPDLNISACILLFPHEAWHFVRMVELN. Asn-192 carries N-linked (GlcNAc...) asparagine glycosylation. The helical transmembrane segment at 215–235 threads the bilayer; it reads VLGFLLPLAAILYFNFHILAS. Residues 236–258 are Cytoplasmic-facing; that stretch reads LRGQKEASRTRCGGPKDSKTMGL. A helical transmembrane segment spans residues 259-279; it reads ILTLVASFLVCWAPYHFFAFL. The Extracellular segment spans residues 280-302; sequence DFLVQVRVIQDCFWKELTDLGLQ. The chain crosses the membrane as a helical span at residues 303–323; sequence LANFFAFVNSCLNPLIYVFAG. Topologically, residues 324–334 are cytoplasmic; it reads RLFKTRVLGTL.

The protein belongs to the G-protein coupled receptor 1 family. Bradykinin receptor subfamily. BDKRB1 sub-subfamily. In terms of tissue distribution, expressed in heart, liver and lung.

It localises to the cell membrane. In terms of biological role, this is a receptor for bradykinin. Could be a factor in chronic pain and inflammation. The polypeptide is B1 bradykinin receptor (Bdkrb1) (Mus musculus (Mouse)).